Consider the following 456-residue polypeptide: MLKTSFLLSKRNAVSLSRVLATGISGRNVRHLTLQPSEHYDVAIVGGGIVGLATARELILRHPKLTFCVLEKEKELSMHQSGHNSGVIHCGIYYTPGSLKAKLCVQGLDLTYQYCDEHNIPYKKCGKLIVAVEDKEIPLLNNLYERGKKNGVKDLTMVDKRGIKEIEPHCEGMFAIVSPNTGIVDWAQVALAYGDDFRKGGGDIFTGYEVTDFKCASESGKSQEKEAGLTHPVTVFSNNKQTIKCRYVITCGGLYSDRLAEKSGCNREPRIVPFRGDYLVLKPEKCHLVKGNIYPVPDPNFPFLGVHFTPRMDGSVWLGPNAVLAFAREGYNLLDINLRDLADALAFRGLRQLMFKYFSFGVGEYYRGLNHAAQVKQLQKYIPSVTADDVVSGPSGVRAQALDRDGNLVDDFVFDGGVGEIGSRVLHVRNAPSPAATSSLAIARMVADKAAERFTL.

The transit peptide at 1 to 20 (MLKTSFLLSKRNAVSLSRVL) directs the protein to the mitochondrion.

The protein belongs to the L2HGDH family. Requires FAD as cofactor.

The protein localises to the mitochondrion. The enzyme catalyses (S)-2-hydroxyglutarate + A = 2-oxoglutarate + AH2. In Nematostella vectensis (Starlet sea anemone), this protein is L-2-hydroxyglutarate dehydrogenase, mitochondrial.